The primary structure comprises 650 residues: Threonine--tRNA ligase (650 aa).

The TGS domain maps to 3 to 65 (DLVKVTLPDG…DRDARLEIVT (63 aa)). Residues 248-548 (DHRRLGPQLG…LTEHYAGAFP (301 aa)) are catalytic. The Zn(2+) site is built by Cys349, His400, and His525.

It belongs to the class-II aminoacyl-tRNA synthetase family. Homodimer. It depends on Zn(2+) as a cofactor.

It is found in the cytoplasm. It catalyses the reaction tRNA(Thr) + L-threonine + ATP = L-threonyl-tRNA(Thr) + AMP + diphosphate + H(+). Functionally, catalyzes the attachment of threonine to tRNA(Thr) in a two-step reaction: L-threonine is first activated by ATP to form Thr-AMP and then transferred to the acceptor end of tRNA(Thr). Also edits incorrectly charged L-seryl-tRNA(Thr). This is Threonine--tRNA ligase from Anaeromyxobacter dehalogenans (strain 2CP-C).